The primary structure comprises 209 residues: Probable GTP-binding protein EngB (209 aa).

The 177-residue stretch at 22–198 (TPLEIAFVGR…NRTVGSWFDA (177 aa)) folds into the EngB-type G domain. Mg(2+) contacts are provided by Ser37 and Thr59.

Belongs to the TRAFAC class TrmE-Era-EngA-EngB-Septin-like GTPase superfamily. EngB GTPase family. Mg(2+) serves as cofactor.

Functionally, necessary for normal cell division and for the maintenance of normal septation. This chain is Probable GTP-binding protein EngB, found in Neisseria meningitidis serogroup C (strain 053442).